A 620-amino-acid chain; its full sequence is Translocator protein BipB (620 aa).

The interval 58–95 is disordered; sequence QCDAQPAAHDARLDDKPALRAPQERDAPPLGASDTGSR. The segment covering 66–84 has biased composition (basic and acidic residues); sequence HDARLDDKPALRAPQERDA. A coiled-coil region spans residues 309–339; it reads EMQAKREAELQKKSDEYQAQVKKAEEMQKTM. The next 3 membrane-spanning stretches (helical) occupy residues 355-375, 401-421, and 430-450; these read FAAA…GLAL, AILK…LVAC, and LAGA…AAFV.

Belongs to the SctE/SipB/YopB family.

It localises to the secreted. The protein localises to the host membrane. Functionally, plays a role in the bacterium-induced formation of multinucleated giant cell (MNGC), which is formed after host cell fusion, as well as in the intercellular spreading of bacteria and in the induction of apoptosis in macrophages. May act in concert with other effector proteins to induce fusion of host cell membranes. In Burkholderia pseudomallei (strain 1710b), this protein is Translocator protein BipB (bipB).